Here is a 370-residue protein sequence, read N- to C-terminus: Chloromuconate cycloisomerase (370 aa).

The active-site Proton acceptor is the Lys-165. The Mn(2+) site is built by Asp-194, Glu-220, and Asp-245. The active-site Proton donor is the Glu-323.

The protein belongs to the mandelate racemase/muconate lactonizing enzyme family. It depends on Mn(2+) as a cofactor.

The catalysed reaction is 2-[(2R)-2-chloro-2,5-dihydro-5-oxofuryl]acetate = 3-chloro-cis,cis-muconate + H(+). The protein operates within aromatic compound metabolism; 3-chlorocatechol degradation. This Pseudomonas sp. (strain P51) protein is Chloromuconate cycloisomerase (tcbD).